Consider the following 257-residue polypeptide: Uracil phosphoribosyltransferase (257 aa).

5-phospho-alpha-D-ribose 1-diphosphate-binding positions include R77, R102, and 129 to 137 (DPMLATGGS). Uracil contacts are provided by residues I192 and 197–199 (GDA). D198 serves as a coordination point for 5-phospho-alpha-D-ribose 1-diphosphate. The disordered stretch occupies residues 203 to 257 (QFGPNLFTSSAPSRPEAPAGRGRAAAKTPGRRSARSESPSSTSPSARSRKAAPPA). Composition is skewed to low complexity over residues 211–230 (SSAPSRPEAPAGRGRAAAKT) and 238–248 (SESPSSTSPSA).

Belongs to the UPRTase family. The cofactor is Mg(2+).

It catalyses the reaction UMP + diphosphate = 5-phospho-alpha-D-ribose 1-diphosphate + uracil. It participates in pyrimidine metabolism; UMP biosynthesis via salvage pathway; UMP from uracil: step 1/1. Allosterically activated by GTP. In terms of biological role, catalyzes the conversion of uracil and 5-phospho-alpha-D-ribose 1-diphosphate (PRPP) to UMP and diphosphate. This Mycolicibacterium paratuberculosis (strain ATCC BAA-968 / K-10) (Mycobacterium paratuberculosis) protein is Uracil phosphoribosyltransferase.